A 405-amino-acid chain; its full sequence is Solute carrier family 35 member E2A (405 aa).

Residues 1–22 (MSAAAKSQVPEEAAPGCEEEPK) are disordered. 10 helical membrane passes run 76 to 96 (LIYL…NKYI), 106 to 126 (MLGA…IFVP), 142 to 162 (FIMT…LGLV), 167 to 187 (VAVS…VIMS), 195 to 215 (TGLL…LCTA), 219 to 241 (SFNI…QNVF), 264 to 284 (AAAV…PVIG), 296 to 316 (IVLL…TAYA), 326 to 346 (FSVA…IVFG), and 347 to 367 (NKIT…VLLY). The disordered stretch occupies residues 380 to 405 (SLVTATSRNPEDDTEPLVPQDSRQHH).

It belongs to the TPT transporter family. SLC35E subfamily.

It localises to the membrane. Its function is as follows. Putative transporter. The polypeptide is Solute carrier family 35 member E2A (Slc35e2a) (Mus musculus (Mouse)).